The sequence spans 30 residues: Cyclotide hyen-H (30 aa).

Positions 1–30 (KIPCGESCVYIPCISSVLGCSCSNKVCYKD) form a cross-link, cyclopeptide (Lys-Asp). Disulfide bonds link C4/C20, C8/C22, and C13/C27.

This is a cyclic peptide. In terms of tissue distribution, detected in stems (at protein level).

Probably participates in a plant defense mechanism. The sequence is that of Cyclotide hyen-H from Pigea enneasperma (Spade flower).